The primary structure comprises 384 residues: Carbamoyl phosphate synthase small chain (384 aa).

Residues 1–193 (MTKPATTPAI…DSHPEIPASE (193 aa)) are CPSase. Ser51, Gly245, and Gly247 together coordinate L-glutamine. Residues 197-384 (HVVAYDYGVK…ISAMAPVVDR (188 aa)) enclose the Glutamine amidotransferase type-1 domain. The Nucleophile role is filled by Cys273. Leu274, Gln277, Asn315, Gly317, and Phe318 together coordinate L-glutamine. Catalysis depends on residues His357 and Glu359.

It belongs to the CarA family. As to quaternary structure, composed of two chains; the small (or glutamine) chain promotes the hydrolysis of glutamine to ammonia, which is used by the large (or ammonia) chain to synthesize carbamoyl phosphate. Tetramer of heterodimers (alpha,beta)4.

The enzyme catalyses hydrogencarbonate + L-glutamine + 2 ATP + H2O = carbamoyl phosphate + L-glutamate + 2 ADP + phosphate + 2 H(+). It carries out the reaction L-glutamine + H2O = L-glutamate + NH4(+). It functions in the pathway amino-acid biosynthesis; L-arginine biosynthesis; carbamoyl phosphate from bicarbonate: step 1/1. The protein operates within pyrimidine metabolism; UMP biosynthesis via de novo pathway; (S)-dihydroorotate from bicarbonate: step 1/3. Its function is as follows. Small subunit of the glutamine-dependent carbamoyl phosphate synthetase (CPSase). CPSase catalyzes the formation of carbamoyl phosphate from the ammonia moiety of glutamine, carbonate, and phosphate donated by ATP, constituting the first step of 2 biosynthetic pathways, one leading to arginine and/or urea and the other to pyrimidine nucleotides. The small subunit (glutamine amidotransferase) binds and cleaves glutamine to supply the large subunit with the substrate ammonia. In Stutzerimonas stutzeri (Pseudomonas stutzeri), this protein is Carbamoyl phosphate synthase small chain.